We begin with the raw amino-acid sequence, 319 residues long: Cytochrome c biogenesis protein CcsA (319 aa).

7 helical membrane-spanning segments follow: residues 9-29, 44-64, 68-88, 143-163, 223-243, 257-271, and 286-306; these read ILTHISFSTISIVITIHLITL, GMIVTFFSITGFLVSRWASSG, LSNLYESLIFLSWALYILHTI, MLLSYATLLCGSLLSAAILII, VISLGFTLLTIGILCGAVWAN, TWAFITWTIFAIYLH, and VASIGFLIIWICYFGINLLGI.

This sequence belongs to the CcmF/CycK/Ccl1/NrfE/CcsA family. As to quaternary structure, may interact with Ccs1.

It is found in the plastid. It localises to the chloroplast thylakoid membrane. In terms of biological role, required during biogenesis of c-type cytochromes (cytochrome c6 and cytochrome f) at the step of heme attachment. This is Cytochrome c biogenesis protein CcsA from Agrostis stolonifera (Creeping bentgrass).